We begin with the raw amino-acid sequence, 284 residues long: tRNA-splicing endonuclease (284 aa).

Active-site residues include Tyr222, His229, and Lys257.

Belongs to the tRNA-intron endonuclease family. Archaeal long subfamily. Homodimer.

It catalyses the reaction pretRNA = a 3'-half-tRNA molecule with a 5'-OH end + a 5'-half-tRNA molecule with a 2',3'-cyclic phosphate end + an intron with a 2',3'-cyclic phosphate and a 5'-hydroxyl terminus.. In terms of biological role, endonuclease that removes tRNA introns. Cleaves pre-tRNA at the 5'- and 3'-splice sites to release the intron. The products are an intron and two tRNA half-molecules bearing 2',3' cyclic phosphate and 5'-OH termini. Recognizes a pseudosymmetric substrate in which 2 bulged loops of 3 bases are separated by a stem of 4 bp. The protein is tRNA-splicing endonuclease of Picrophilus torridus (strain ATCC 700027 / DSM 9790 / JCM 10055 / NBRC 100828 / KAW 2/3).